The chain runs to 642 residues: LIM domain kinase 2 (642 aa).

LIM zinc-binding domains lie at 12–63 (CLGC…CHKD) and 72–124 (CHGC…CGKC). One can recognise a PDZ domain in the interval 152–239 (LISMPAATDG…TLQLLIEHDP (88 aa)). Residues 282-304 (RSLRRSNSISKSPGPSSPKEPLL) form a disordered region. Low complexity predominate over residues 286–304 (RSNSISKSPGPSSPKEPLL). Residues 331–608 (LIHGEVLGKG…DSFEALSLYL (278 aa)) form the Protein kinase domain. ATP-binding positions include 337 to 345 (LGKGFFGQA) and lysine 360. Aspartate 451 is a catalytic residue. At threonine 505 the chain carries Phosphothreonine.

This sequence belongs to the protein kinase superfamily. TKL Ser/Thr protein kinase family. As to quaternary structure, binds ROCK1 and LKAP. In terms of tissue distribution, expressed predominantly in the lung, and faintly in the kidney, liver, brain, spleen, gizzard, and intestine.

The protein resides in the cytoplasm. The protein localises to the cytoskeleton. It localises to the spindle. Its subcellular location is the microtubule organizing center. It is found in the centrosome. The enzyme catalyses L-seryl-[protein] + ATP = O-phospho-L-seryl-[protein] + ADP + H(+). The catalysed reaction is L-threonyl-[protein] + ATP = O-phospho-L-threonyl-[protein] + ADP + H(+). In terms of biological role, serine/threonine-protein kinase that plays an essential role in the regulation of actin filament dynamics. Acts downstream of several Rho family GTPase signal transduction pathways. Involved in astral microtubule organization and mitotic spindle orientation during early stages of mitosis by mediating phosphorylation of TPPP. This is LIM domain kinase 2 (LIMK2) from Gallus gallus (Chicken).